A 246-amino-acid chain; its full sequence is MAGHSKWKNIQRRKNAQDAKRGKLFMKLAKEIYVAAKTGGGDPASNPALRLVIEKAKAANMPNENIERAIKKATGTQEHTNYEEVRYEGYGPGGVAVMVVCLTDNKNRTASNVRVAFSKNGGNLGETGCVSYLFDRKGLLVIAREGLDIDEDDMLLQAIEAGAEEMETTEDSFEIYTTPEAFEEVKEQLEKNGFTFASAEITMIPQTYTTLAGDDLKKMLKLIDTLEDDDDVQEVYHNLDESVLEE.

It belongs to the TACO1 family.

The protein resides in the cytoplasm. The polypeptide is Probable transcriptional regulatory protein GWCH70_2524 (Geobacillus sp. (strain WCH70)).